A 388-amino-acid polypeptide reads, in one-letter code: Succinate--CoA ligase [ADP-forming] subunit beta (388 aa).

An ATP-grasp domain is found at 9-244; that stretch reads KQLFAEYGLP…PSQDDAREAH (236 aa). ATP-binding positions include Lys46, 53 to 55, Glu99, Thr102, and Glu107; that span reads GRG. Mg(2+) contacts are provided by Asn199 and Asp213. Residues Asn264 and 321-323 contribute to the substrate site; that span reads GIV.

It belongs to the succinate/malate CoA ligase beta subunit family. Heterotetramer of two alpha and two beta subunits. Mg(2+) is required as a cofactor.

It catalyses the reaction succinate + ATP + CoA = succinyl-CoA + ADP + phosphate. The catalysed reaction is GTP + succinate + CoA = succinyl-CoA + GDP + phosphate. Its pathway is carbohydrate metabolism; tricarboxylic acid cycle; succinate from succinyl-CoA (ligase route): step 1/1. Functionally, succinyl-CoA synthetase functions in the citric acid cycle (TCA), coupling the hydrolysis of succinyl-CoA to the synthesis of either ATP or GTP and thus represents the only step of substrate-level phosphorylation in the TCA. The beta subunit provides nucleotide specificity of the enzyme and binds the substrate succinate, while the binding sites for coenzyme A and phosphate are found in the alpha subunit. This chain is Succinate--CoA ligase [ADP-forming] subunit beta, found in Pseudomonas aeruginosa (strain UCBPP-PA14).